Reading from the N-terminus, the 286-residue chain is Phosducin-like protein 2 (286 aa).

Phosphoserine occurs at positions 35 and 62. The thioredoxin fold stretch occupies residues 96 to 286 (FGEVFHINKP…INDDDDGFFD (191 aa)).

This sequence belongs to the phosducin family. Interacts with the G protein beta-gamma subunit complex (STE4-STE18 complex). Interacts with CCT2; this interaction leads to inhibition of CCT complex mediated actin folding.

The protein resides in the cytoplasm. In terms of biological role, essential for cell growth. Inhibits early G-protein signaling events following pheromone stimulation. Inhibits the folding activity of the chaperonin-containing T-complex (CCT) CCT2 which leads to inhibition of cytoskeletal actin folding. Plays a role in cell cycle progression in G1/S phase. The sequence is that of Phosducin-like protein 2 from Saccharomyces cerevisiae (strain ATCC 204508 / S288c) (Baker's yeast).